A 106-amino-acid chain; its full sequence is Large ribosomal subunit protein eL42 (106 aa).

This sequence belongs to the eukaryotic ribosomal protein eL42 family.

The protein is Large ribosomal subunit protein eL42 (RPL44) of Kluyveromyces lactis (strain ATCC 8585 / CBS 2359 / DSM 70799 / NBRC 1267 / NRRL Y-1140 / WM37) (Yeast).